A 142-amino-acid chain; its full sequence is Small ribosomal subunit protein uS19 (142 aa).

This sequence belongs to the universal ribosomal protein uS19 family. Component of the small ribosomal subunit. Mature ribosomes consist of a small (40S) and a large (60S) subunit. The 40S subunit contains about 32 different proteins and 1 molecule of RNA (18S). The 60S subunit contains 45 different proteins and 3 molecules of RNA (25S, 5.8S and 5S).

It is found in the cytoplasm. In terms of biological role, component of the ribosome, a large ribonucleoprotein complex responsible for the synthesis of proteins in the cell. The small ribosomal subunit (SSU) binds messenger RNAs (mRNAs) and translates the encoded message by selecting cognate aminoacyl-transfer RNA (tRNA) molecules. The large subunit (LSU) contains the ribosomal catalytic site termed the peptidyl transferase center (PTC), which catalyzes the formation of peptide bonds, thereby polymerizing the amino acids delivered by tRNAs into a polypeptide chain. The nascent polypeptides leave the ribosome through a tunnel in the LSU and interact with protein factors that function in enzymatic processing, targeting, and the membrane insertion of nascent chains at the exit of the ribosomal tunnel. RPS15 has a role in the late stage of the assembly of pre-40S particles within the nucleus and controls their export to the cytoplasm. This chain is Small ribosomal subunit protein uS19 (RPS15), found in Candida albicans (strain SC5314 / ATCC MYA-2876) (Yeast).